The chain runs to 719 residues: Exonuclease mut-7 homolog (719 aa).

The tract at residues 1-22 (MSKSNNVAPPCRQDQLGFVPAG) is disordered. Residues 575–629 (NLANLVRLCLGKKLDKSNQFSNWAQRPLRKEQLRYAALDAFCLLEIYDAIEKQLT) enclose the 3'-5' exonuclease domain. Residues 644–719 (NDVRPPSDSG…FEGPNTKSVL (76 aa)) are disordered. The span at 667–678 (RRNHRDKYNKRH) shows a compositional bias: basic residues. Composition is skewed to polar residues over residues 683-692 (DSNSGNSSRA) and 706-719 (EQQTFEGPNTKSVL).

Belongs to the mut-7 family. Requires Mg(2+) as cofactor.

Possesses 3'-5' exoribonuclease activity. Required for 3'-end trimming of AGO1-bound miRNAs. The sequence is that of Exonuclease mut-7 homolog from Aedes aegypti (Yellowfever mosquito).